Here is a 272-residue protein sequence, read N- to C-terminus: METYAVFGNPIAHSKSPFIHQQFAQQLNIEHPYGRVLAPINDFINTLNTFFSAGGKGANVTVPFKEEAFARADELTERAALAGAVNTLKRLEDGRLLGDNTDGIGLLSDLERLSFIRPGLRILLIGAGGASRGVLLPLLSLDCAVTITNRTVSRAEELAKLFAHTGSIHALGMDELEGHEFDLIINATSSGISGDIPAIPPSLIHPGIYCYDMFYQKGKTPFLAWCEQRGSKRTADGLGMLVAQAAHAFLLWHGVLPDVEPVIKLLQQELSA.

Residues Ser14–Ser16 and Thr61 contribute to the shikimate site. The active-site Proton acceptor is Lys65. Glu77 lines the NADP(+) pocket. Asn86 and Asp102 together coordinate shikimate. Residues Gly126–Ala130, Asn149–Arg154, and Met213 each bind NADP(+). Tyr215 contacts shikimate. Position 237 (Gly237) interacts with NADP(+).

It belongs to the shikimate dehydrogenase family. In terms of assembly, homodimer.

The catalysed reaction is shikimate + NADP(+) = 3-dehydroshikimate + NADPH + H(+). It functions in the pathway metabolic intermediate biosynthesis; chorismate biosynthesis; chorismate from D-erythrose 4-phosphate and phosphoenolpyruvate: step 4/7. Functionally, involved in the biosynthesis of the chorismate, which leads to the biosynthesis of aromatic amino acids. Catalyzes the reversible NADPH linked reduction of 3-dehydroshikimate (DHSA) to yield shikimate (SA). The polypeptide is Shikimate dehydrogenase (NADP(+)) (Escherichia coli O6:H1 (strain CFT073 / ATCC 700928 / UPEC)).